Reading from the N-terminus, the 92-residue chain is Small ribosomal subunit protein uS19 (92 aa).

This sequence belongs to the universal ribosomal protein uS19 family.

Its function is as follows. Protein S19 forms a complex with S13 that binds strongly to the 16S ribosomal RNA. The chain is Small ribosomal subunit protein uS19 from Granulibacter bethesdensis (strain ATCC BAA-1260 / CGDNIH1).